Reading from the N-terminus, the 297-residue chain is Palmitoyl-protein thioesterase ABHD10, mitochondrial (297 aa).

The N-terminal 43 residues, 1 to 43, are a transit peptide targeting the mitochondrion; it reads MAAWAPCRRWGWAAVSFGRHPGLSASLARKPPRAWWLSACRQK. The AB hydrolase-1 domain maps to 69–196; sequence IIFIPGYLSN…EIEMKGEWTL (128 aa). Residues S143, D240, and H270 each act as charge relay system in the active site.

Belongs to the AB hydrolase superfamily.

The protein localises to the mitochondrion. It carries out the reaction S-hexadecanoyl-L-cysteinyl-[protein] + H2O = L-cysteinyl-[protein] + hexadecanoate + H(+). The enzyme catalyses mycophenolic acid O-acyl-beta-D-glucuronide + H2O = mycophenolate + D-glucuronate + H(+). Its activity is regulated as follows. Inhibited by palmostatin-B. Its function is as follows. Acts as an acyl-protein thioesterase that hydrolyzes fatty acids from acylated residues in proteins. Regulates the mitochondrial S-depalmitoylation of the nucleophilic active site residue of peroxiredoxin-5/PRDX5, a key antioxidant protein, therefore modulating mitochondrial antioxidant ability. Also catalyzes the deglucuronidation of mycophenolic acid acyl-glucuronide, an active metabolite of the immunosuppressant drug mycophenolate. The sequence is that of Palmitoyl-protein thioesterase ABHD10, mitochondrial from Mus musculus (Mouse).